The chain runs to 810 residues: Phospholipase D alpha 2 (810 aa).

The C2 domain maps to 1 to 126 (MEECLLHGRL…LHGEEVDRWV (126 aa)). A Ca(2+)-binding site is contributed by D187. Positions 327-365 (TMFTHHQKIVVVDSEMPSGGSRSRRIVSFVGGLDLCDGR) constitute a PLD phosphodiesterase 1 domain. Active-site residues include H332, K334, and D339. H332 contacts a 1,2-diacyl-sn-glycero-3-phosphate. Positions 371 and 405 each coordinate Ca(2+). Q521 and H661 together coordinate a 1,2-diacyl-sn-glycero-3-phosphate. The PLD phosphodiesterase 2 domain occupies 656–683 (FMIYVHTKMMIVDDEYIIIGSANINQRS). Active-site residues include H661, K663, and D668. A Ca(2+)-binding site is contributed by E722.

The protein belongs to the phospholipase D family. C2-PLD subfamily. Ca(2+) is required as a cofactor. As to expression, highly expressed in roots, stems and flowers, moderately in leaves, seedlings and siliques. Not detected in dry seeds.

The protein resides in the cytoplasm. It is found in the membrane. It localises to the vacuole. The protein localises to the cytoplasmic vesicle. Its subcellular location is the clathrin-coated vesicle. It catalyses the reaction a 1,2-diacyl-sn-glycero-3-phosphocholine + H2O = a 1,2-diacyl-sn-glycero-3-phosphate + choline + H(+). Hydrolyzes glycerol-phospholipids at the terminal phosphodiesteric bond to generate phosphatidic acids (PA). Plays an important role in various cellular processes, including phytohormone action and response to stress, characterized by acidification of the cell. The polypeptide is Phospholipase D alpha 2 (Arabidopsis thaliana (Mouse-ear cress)).